A 226-amino-acid chain; its full sequence is Apoptosis regulator OPG045 (226 aa).

The protein belongs to the orthopoxvirus OPG045 family. Homodimer. Interacts with host pro-apoptotic protein BCL2L11 (via BH3 domain). Interacts with host NLRP1. Interacts with host BAK.

Its subcellular location is the host mitochondrion outer membrane. It is found in the host cytoplasm. Its function is as follows. Plays a role in evading host innate immune response by inhibiting host inflammasome activation. Interacts with and inhibits NLR-mediated interleukin-1 beta/IL1B production in infected cells. At the host mitochondria outer membrane, interacts with the BH3 domain of host BAK and prevents BAK from binding active BAX. In turn, host apoptosis is inhibited. The chain is Apoptosis regulator OPG045 (OPG045) from Homo sapiens (Human).